The primary structure comprises 580 residues: Serine/threonine-protein kinase srk1 (580 aa).

The span at Val-51–Lys-61 shows a compositional bias: polar residues. Residues Val-51–Glu-91 are disordered. The Protein kinase domain occupies Tyr-124–Ile-421. ATP is bound by residues Met-130–Val-138 and Lys-153. Asp-257 acts as the Proton acceptor in catalysis. Residues Asn-530–Val-580 are disordered. Residues Pro-537–Arg-554 show a composition bias toward low complexity.

It belongs to the protein kinase superfamily. CAMK Ser/Thr protein kinase family. CaMK subfamily. It depends on Mg(2+) as a cofactor. Phosphorylated by sty1.

Its subcellular location is the cytoplasm. It localises to the nucleus. The protein localises to the nucleolus. The protein resides in the spore core. It catalyses the reaction L-seryl-[protein] + ATP = O-phospho-L-seryl-[protein] + ADP + H(+). The enzyme catalyses L-threonyl-[protein] + ATP = O-phospho-L-threonyl-[protein] + ADP + H(+). Delays the mitotic G2/M transition by promoting nuclear exclusion of cdc25. During osmotic stress, inhibits the G2/M transition in a sty1 stress-activated MAPK pathway-dependent manner. The chain is Serine/threonine-protein kinase srk1 from Schizosaccharomyces pombe (strain 972 / ATCC 24843) (Fission yeast).